Reading from the N-terminus, the 569-residue chain is CTP synthase (569 aa).

The interval 1–272 is amidoligase domain; the sequence is MARPKNVKHI…DSRVLKKLGI (272 aa). Ser18 serves as a coordination point for CTP. UTP is bound at residue Ser18. 19 to 24 contacts ATP; it reads SLGKGI. Tyr59 provides a ligand contact to L-glutamine. Asp76 contacts ATP. Positions 76 and 146 each coordinate Mg(2+). CTP is bound by residues 153-155, 193-198, and Lys229; these read DIE and KTKPTQ. UTP contacts are provided by residues 193–198 and Lys229; that span reads KTKPTQ. The Glutamine amidotransferase type-1 domain occupies 299-543; sequence TIGICGKYTE…VAAAKDYARG (245 aa). An L-glutamine-binding site is contributed by Gly363. Cys390 (nucleophile; for glutamine hydrolysis) is an active-site residue. L-glutamine is bound by residues 391–394, Glu414, and Arg471; that span reads LGMQ. Catalysis depends on residues His516 and Glu518.

It belongs to the CTP synthase family. In terms of assembly, homotetramer.

It carries out the reaction UTP + L-glutamine + ATP + H2O = CTP + L-glutamate + ADP + phosphate + 2 H(+). The enzyme catalyses L-glutamine + H2O = L-glutamate + NH4(+). The catalysed reaction is UTP + NH4(+) + ATP = CTP + ADP + phosphate + 2 H(+). It functions in the pathway pyrimidine metabolism; CTP biosynthesis via de novo pathway; CTP from UDP: step 2/2. Allosterically activated by GTP, when glutamine is the substrate; GTP has no effect on the reaction when ammonia is the substrate. The allosteric effector GTP functions by stabilizing the protein conformation that binds the tetrahedral intermediate(s) formed during glutamine hydrolysis. Inhibited by the product CTP, via allosteric rather than competitive inhibition. Catalyzes the ATP-dependent amination of UTP to CTP with either L-glutamine or ammonia as the source of nitrogen. Regulates intracellular CTP levels through interactions with the four ribonucleotide triphosphates. This chain is CTP synthase, found in Chlorobium chlorochromatii (strain CaD3).